A 400-amino-acid chain; its full sequence is Formate-dependent phosphoribosylglycinamide formyltransferase (400 aa).

N(1)-(5-phospho-beta-D-ribosyl)glycinamide-binding positions include 22–23 and glutamate 82; that span reads EL. ATP contacts are provided by residues arginine 115, lysine 156, 161–166, 196–199, and glutamate 204; these read SSGKGQ and EGFI. An ATP-grasp domain is found at 120–309; it reads RLAAETLGLP…EFALHARAIL (190 aa). The Mg(2+) site is built by glutamate 268 and glutamate 280. Residues aspartate 287, lysine 361, and 368-369 contribute to the N(1)-(5-phospho-beta-D-ribosyl)glycinamide site; that span reads RR.

The protein belongs to the PurK/PurT family. As to quaternary structure, homodimer.

The catalysed reaction is N(1)-(5-phospho-beta-D-ribosyl)glycinamide + formate + ATP = N(2)-formyl-N(1)-(5-phospho-beta-D-ribosyl)glycinamide + ADP + phosphate + H(+). It functions in the pathway purine metabolism; IMP biosynthesis via de novo pathway; N(2)-formyl-N(1)-(5-phospho-D-ribosyl)glycinamide from N(1)-(5-phospho-D-ribosyl)glycinamide (formate route): step 1/1. Functionally, involved in the de novo purine biosynthesis. Catalyzes the transfer of formate to 5-phospho-ribosyl-glycinamide (GAR), producing 5-phospho-ribosyl-N-formylglycinamide (FGAR). Formate is provided by PurU via hydrolysis of 10-formyl-tetrahydrofolate. This chain is Formate-dependent phosphoribosylglycinamide formyltransferase, found in Xanthomonas campestris pv. campestris (strain 8004).